The primary structure comprises 637 residues: Threonine--tRNA ligase (637 aa).

The region spanning 1-61 (MPNVKLPDGN…KEDCSLIIVT (61 aa)) is the TGS domain. The segment at 242-533 (DHRKLGKALD…LIEHYAGKLP (292 aa)) is catalytic. The Zn(2+) site is built by C333, H384, and H510.

Belongs to the class-II aminoacyl-tRNA synthetase family. As to quaternary structure, homodimer. The cofactor is Zn(2+).

The protein localises to the cytoplasm. The enzyme catalyses tRNA(Thr) + L-threonine + ATP = L-threonyl-tRNA(Thr) + AMP + diphosphate + H(+). Catalyzes the attachment of threonine to tRNA(Thr) in a two-step reaction: L-threonine is first activated by ATP to form Thr-AMP and then transferred to the acceptor end of tRNA(Thr). Also edits incorrectly charged L-seryl-tRNA(Thr). The sequence is that of Threonine--tRNA ligase from Legionella pneumophila subsp. pneumophila (strain Philadelphia 1 / ATCC 33152 / DSM 7513).